The chain runs to 538 residues: Phosphoenolpyruvate carboxykinase (ATP) (538 aa).

Positions 64, 205, and 211 each coordinate substrate. ATP is bound by residues lysine 211, histidine 230, and 246–254; that span reads GLSGTGKTT. Lysine 211 and histidine 230 together coordinate Mn(2+). Aspartate 267 lines the Mn(2+) pocket. ATP is bound by residues glutamate 295, arginine 331, 447–448, and threonine 453; that span reads RI. Arginine 331 contributes to the substrate binding site.

The protein belongs to the phosphoenolpyruvate carboxykinase (ATP) family. In terms of assembly, monomer. It depends on Mn(2+) as a cofactor.

The protein resides in the cytoplasm. The enzyme catalyses oxaloacetate + ATP = phosphoenolpyruvate + ADP + CO2. The protein operates within carbohydrate biosynthesis; gluconeogenesis. Its function is as follows. Involved in the gluconeogenesis. Catalyzes the conversion of oxaloacetate (OAA) to phosphoenolpyruvate (PEP) through direct phosphoryl transfer between the nucleoside triphosphate and OAA. The chain is Phosphoenolpyruvate carboxykinase (ATP) from Haemophilus influenzae (strain PittEE).